The sequence spans 199 residues: Recombination protein RecR (199 aa).

The C4-type zinc-finger motif lies at 57–72; the sequence is CPICGNITEKEICDIC. The 97-residue stretch at 80-176 folds into the Toprim domain; it reads TTIMVVEQPK…KVTRLAAGLS (97 aa).

The protein belongs to the RecR family.

In terms of biological role, may play a role in DNA repair. It seems to be involved in an RecBC-independent recombinational process of DNA repair. It may act with RecF and RecO. The chain is Recombination protein RecR from Lactobacillus acidophilus (strain ATCC 700396 / NCK56 / N2 / NCFM).